The chain runs to 162 residues: ATP synthase subunit b 1 (162 aa).

Residues 1-21 (MLLTAEFWVAVAFVAFLVIVW) form a helical membrane-spanning segment.

This sequence belongs to the ATPase B chain family. F-type ATPases have 2 components, F(1) - the catalytic core - and F(0) - the membrane proton channel. F(1) has five subunits: alpha(3), beta(3), gamma(1), delta(1), epsilon(1). F(0) has three main subunits: a(1), b(2) and c(10-14). The alpha and beta chains form an alternating ring which encloses part of the gamma chain. F(1) is attached to F(0) by a central stalk formed by the gamma and epsilon chains, while a peripheral stalk is formed by the delta and b chains.

The protein localises to the cell inner membrane. F(1)F(0) ATP synthase produces ATP from ADP in the presence of a proton or sodium gradient. F-type ATPases consist of two structural domains, F(1) containing the extramembraneous catalytic core and F(0) containing the membrane proton channel, linked together by a central stalk and a peripheral stalk. During catalysis, ATP synthesis in the catalytic domain of F(1) is coupled via a rotary mechanism of the central stalk subunits to proton translocation. In terms of biological role, component of the F(0) channel, it forms part of the peripheral stalk, linking F(1) to F(0). The sequence is that of ATP synthase subunit b 1 from Methylorubrum extorquens (strain PA1) (Methylobacterium extorquens).